The following is a 467-amino-acid chain: Chromosomal replication initiator protein DnaA (467 aa).

Residues 1-85 (MTTTLWPQVL…LEVGEYAIES (85 aa)) form a domain I, interacts with DnaA modulators region. Positions 85 to 130 (SFNEPENTSVPQPLRETKAEREAAEKAASSTSKKKSDSPPKKTIKH) are domain II. A disordered region spans residues 87–129 (NEPENTSVPQPLRETKAEREAAEKAASSTSKKKSDSPPKKTIK). Residues 99 to 109 (RETKAEREAAE) are compositionally biased toward basic and acidic residues. The segment at 131–347 (NLNTNFTFDT…GALKRVGAFA (217 aa)) is domain III, AAA+ region. ATP-binding residues include Gly-175, Gly-177, Lys-178, and Thr-179. A domain IV, binds dsDNA region spans residues 348–467 (QFTQQLVTVD…FNSLIRIITN (120 aa)).

This sequence belongs to the DnaA family. In terms of assembly, oligomerizes as a right-handed, spiral filament on DNA at oriC.

It is found in the cytoplasm. In terms of biological role, plays an essential role in the initiation and regulation of chromosomal replication. ATP-DnaA binds to the origin of replication (oriC) to initiate formation of the DNA replication initiation complex once per cell cycle. Binds the DnaA box (a 9 base pair repeat at the origin) and separates the double-stranded (ds)DNA. Forms a right-handed helical filament on oriC DNA; dsDNA binds to the exterior of the filament while single-stranded (ss)DNA is stabiized in the filament's interior. The ATP-DnaA-oriC complex binds and stabilizes one strand of the AT-rich DNA unwinding element (DUE), permitting loading of DNA polymerase. After initiation quickly degrades to an ADP-DnaA complex that is not apt for DNA replication. Binds acidic phospholipids. This is Chromosomal replication initiator protein DnaA from Hydrogenovibrio crunogenus (strain DSM 25203 / XCL-2) (Thiomicrospira crunogena).